Here is a 1144-residue protein sequence, read N- to C-terminus: ATP-dependent helicase/deoxyribonuclease subunit B (1144 aa).

Positions 1–276 (MAIRYVFGRA…IDLDRNERPV (276 aa)) constitute a UvrD-like helicase ATP-binding domain. Position 8–15 (8–15 (GRAGRGKS)) interacts with ATP. In terms of domain architecture, UvrD-like helicase C-terminal spans 274-584 (RPVLPKVQEI…LVGSIERSKS (311 aa)). 4 residues coordinate [4Fe-4S] cluster: cysteine 784, cysteine 1102, cysteine 1105, and cysteine 1111.

Belongs to the helicase family. AddB/RexB type 1 subfamily. Heterodimer of AddA and AddB. Mg(2+) serves as cofactor. Requires [4Fe-4S] cluster as cofactor.

Functionally, the heterodimer acts as both an ATP-dependent DNA helicase and an ATP-dependent, dual-direction single-stranded exonuclease. Recognizes the chi site generating a DNA molecule suitable for the initiation of homologous recombination. The AddB subunit has 5' -&gt; 3' nuclease activity but not helicase activity. The protein is ATP-dependent helicase/deoxyribonuclease subunit B of Alkaliphilus oremlandii (strain OhILAs) (Clostridium oremlandii (strain OhILAs)).